Consider the following 591-residue polypeptide: Formate--tetrahydrofolate ligase (591 aa).

74 to 81 (TPLGEGKS) lines the ATP pocket.

It belongs to the formate--tetrahydrofolate ligase family.

It carries out the reaction (6S)-5,6,7,8-tetrahydrofolate + formate + ATP = (6R)-10-formyltetrahydrofolate + ADP + phosphate. Its pathway is one-carbon metabolism; tetrahydrofolate interconversion. The sequence is that of Formate--tetrahydrofolate ligase from Desulforapulum autotrophicum (strain ATCC 43914 / DSM 3382 / VKM B-1955 / HRM2) (Desulfobacterium autotrophicum).